Reading from the N-terminus, the 428-residue chain is Trigger factor (428 aa).

Residues 166 to 250 (GDIVTFDFKG…IKNIKEKILP (85 aa)) form the PPIase FKBP-type domain.

This sequence belongs to the FKBP-type PPIase family. Tig subfamily.

It is found in the cytoplasm. The enzyme catalyses [protein]-peptidylproline (omega=180) = [protein]-peptidylproline (omega=0). Its function is as follows. Involved in protein export. Acts as a chaperone by maintaining the newly synthesized protein in an open conformation. Functions as a peptidyl-prolyl cis-trans isomerase. This is Trigger factor from Mycoplasma mycoides subsp. mycoides SC (strain CCUG 32753 / NCTC 10114 / PG1).